The following is a 90-amino-acid chain: DNA-binding protein HU (90 aa).

Belongs to the bacterial histone-like protein family. In terms of assembly, homodimer.

In terms of biological role, histone-like DNA-binding protein which is capable of wrapping DNA to stabilize it, and thus to prevent its denaturation under extreme environmental conditions. The polypeptide is DNA-binding protein HU (hup) (Haemophilus influenzae (strain ATCC 51907 / DSM 11121 / KW20 / Rd)).